The primary structure comprises 425 residues: Kynurenine/alpha-aminoadipate aminotransferase, mitochondrial (425 aa).

The transit peptide at 1–29 directs the protein to the mitochondrion; sequence MNYARFITATSAARKPSTIRVMTEILSKA. A substrate-binding site is contributed by R20. K69 carries the post-translational modification N6-acetyllysine. Substrate contacts are provided by Y74 and Y142. Residues 178 to 208 form a disordered region; it reads WKPEDSKNPKKNSPKFLYTVPNGNNPSGNSL. The residue at position 179 (K179) is an N6-acetyllysine. Residues 198–208 are compositionally biased toward polar residues; that stretch reads PNGNNPSGNSL. N202 is a substrate binding site. K263 carries the N6-(pyridoxal phosphate)lysine; alternate modification. An N6-acetyllysine; alternate mark is found at K263 and K339. N6-succinyllysine; alternate occurs at positions 263 and 339. R399 serves as a coordination point for substrate. K422 is modified (N6-acetyllysine).

Belongs to the class-I pyridoxal-phosphate-dependent aminotransferase family. As to quaternary structure, homodimer. Requires pyridoxal 5'-phosphate as cofactor.

Its subcellular location is the mitochondrion. The enzyme catalyses L-kynurenine + 2-oxoglutarate = kynurenate + L-glutamate + H2O. It catalyses the reaction L-2-aminoadipate + 2-oxoglutarate = 2-oxoadipate + L-glutamate. The catalysed reaction is glycine + 2-oxoglutarate = glyoxylate + L-glutamate. It carries out the reaction L-kynurenine + glyoxylate = kynurenate + glycine + H2O. The enzyme catalyses 3-hydroxy-L-kynurenine + glyoxylate = xanthurenate + glycine + H2O. It catalyses the reaction 2-oxohexanoate + L-kynurenine = L-2-aminohexanoate + kynurenate + H2O. The catalysed reaction is 3-phenylpyruvate + L-kynurenine = kynurenate + L-phenylalanine + H2O. It carries out the reaction 4-methylsulfanyl-2-oxobutanoate + L-kynurenine = kynurenate + L-methionine + H2O. The enzyme catalyses 2-oxo-3-sulfanylpropanoate + L-kynurenine = kynurenate + L-cysteine + H2O. It catalyses the reaction indole-3-pyruvate + L-kynurenine = kynurenate + L-tryptophan + H2O. The catalysed reaction is 2-oxopentanoate + L-kynurenine = L-2-aminopentanoate + kynurenate + H2O. It carries out the reaction 4-methyl-2-oxopentanoate + L-kynurenine = kynurenate + L-leucine + H2O. The enzyme catalyses glyoxylate + L-methionine = 4-methylsulfanyl-2-oxobutanoate + glycine. It catalyses the reaction L-2-aminoadipate + glyoxylate = 2-oxoadipate + glycine. The catalysed reaction is L-tyrosine + glyoxylate = 3-(4-hydroxyphenyl)pyruvate + glycine. It carries out the reaction glyoxylate + L-phenylalanine = 3-phenylpyruvate + glycine. The enzyme catalyses L-tryptophan + glyoxylate = indole-3-pyruvate + glycine. It catalyses the reaction L-leucine + glyoxylate = 4-methyl-2-oxopentanoate + glycine. The catalysed reaction is 2-oxobutanoate + L-kynurenine = (2S)-2-aminobutanoate + kynurenate + H2O. It carries out the reaction 2-oxoadipate + L-kynurenine = L-2-aminoadipate + kynurenate + H2O. It participates in amino-acid degradation; L-lysine degradation via saccharopine pathway; glutaryl-CoA from L-lysine: step 4/6. Functionally, transaminase with broad substrate specificity. Has transaminase activity towards aminoadipate, kynurenine, methionine and glutamate. Shows activity also towards tryptophan, aspartate and hydroxykynurenine. Accepts a variety of oxo-acids as amino-group acceptors, with a preference for 2-oxoglutarate, 2-oxocaproic acid, phenylpyruvate and alpha-oxo-gamma-methiol butyric acid. Can also use glyoxylate as amino-group acceptor (in vitro). The sequence is that of Kynurenine/alpha-aminoadipate aminotransferase, mitochondrial from Bos taurus (Bovine).